Reading from the N-terminus, the 492-residue chain is Glutamyl-tRNA(Gln) amidotransferase subunit A (492 aa).

Catalysis depends on charge relay system residues Lys79 and Ser154. The active-site Acyl-ester intermediate is Ser178.

Belongs to the amidase family. GatA subfamily. Heterotrimer of A, B and C subunits.

The enzyme catalyses L-glutamyl-tRNA(Gln) + L-glutamine + ATP + H2O = L-glutaminyl-tRNA(Gln) + L-glutamate + ADP + phosphate + H(+). Allows the formation of correctly charged Gln-tRNA(Gln) through the transamidation of misacylated Glu-tRNA(Gln) in organisms which lack glutaminyl-tRNA synthetase. The reaction takes place in the presence of glutamine and ATP through an activated gamma-phospho-Glu-tRNA(Gln). In Acinetobacter baumannii (strain ATCC 17978 / DSM 105126 / CIP 53.77 / LMG 1025 / NCDC KC755 / 5377), this protein is Glutamyl-tRNA(Gln) amidotransferase subunit A.